Reading from the N-terminus, the 443-residue chain is Acyl transferase 10 (443 aa).

Catalysis depends on proton acceptor residues H182 and D386.

Belongs to the plant acyltransferase family.

Its function is as follows. Involved in the incorporation of ferulate into the cell wall. May act as arabinoxylan feruloyl transferase. May function as p-coumaroyl-CoA transferase involved in glucuronoarabinoxylan modification. The chain is Acyl transferase 10 from Oryza sativa subsp. japonica (Rice).